We begin with the raw amino-acid sequence, 84 residues long: UPF0291 protein SMU_447 (84 aa).

The interval 57-84 (EGNDITPAKLKEIQRQKGIHGRKPEDNS) is disordered.

It belongs to the UPF0291 family.

The protein localises to the cytoplasm. The chain is UPF0291 protein SMU_447 from Streptococcus mutans serotype c (strain ATCC 700610 / UA159).